A 316-amino-acid chain; its full sequence is Acetyl-coenzyme A carboxylase carboxyl transferase subunit alpha (316 aa).

A CoA carboxyltransferase C-terminal domain is found at 40–293 (LEKRSRDALR…GDLIAKTMKE (254 aa)).

The protein belongs to the AccA family. In terms of assembly, acetyl-CoA carboxylase is a heterohexamer composed of biotin carboxyl carrier protein (AccB), biotin carboxylase (AccC) and two subunits each of ACCase subunit alpha (AccA) and ACCase subunit beta (AccD).

It is found in the cytoplasm. The catalysed reaction is N(6)-carboxybiotinyl-L-lysyl-[protein] + acetyl-CoA = N(6)-biotinyl-L-lysyl-[protein] + malonyl-CoA. It functions in the pathway lipid metabolism; malonyl-CoA biosynthesis; malonyl-CoA from acetyl-CoA: step 1/1. In terms of biological role, component of the acetyl coenzyme A carboxylase (ACC) complex. First, biotin carboxylase catalyzes the carboxylation of biotin on its carrier protein (BCCP) and then the CO(2) group is transferred by the carboxyltransferase to acetyl-CoA to form malonyl-CoA. This is Acetyl-coenzyme A carboxylase carboxyl transferase subunit alpha from Mesorhizobium japonicum (strain LMG 29417 / CECT 9101 / MAFF 303099) (Mesorhizobium loti (strain MAFF 303099)).